We begin with the raw amino-acid sequence, 175 residues long: Crossover junction endodeoxyribonuclease RuvC (175 aa).

Residues D8, E68, and D140 contribute to the active site. Mg(2+) is bound by residues D8, E68, and D140.

It belongs to the RuvC family. Homodimer which binds Holliday junction (HJ) DNA. The HJ becomes 2-fold symmetrical on binding to RuvC with unstacked arms; it has a different conformation from HJ DNA in complex with RuvA. In the full resolvosome a probable DNA-RuvA(4)-RuvB(12)-RuvC(2) complex forms which resolves the HJ. The cofactor is Mg(2+).

It is found in the cytoplasm. The catalysed reaction is Endonucleolytic cleavage at a junction such as a reciprocal single-stranded crossover between two homologous DNA duplexes (Holliday junction).. In terms of biological role, the RuvA-RuvB-RuvC complex processes Holliday junction (HJ) DNA during genetic recombination and DNA repair. Endonuclease that resolves HJ intermediates. Cleaves cruciform DNA by making single-stranded nicks across the HJ at symmetrical positions within the homologous arms, yielding a 5'-phosphate and a 3'-hydroxyl group; requires a central core of homology in the junction. The consensus cleavage sequence is 5'-(A/T)TT(C/G)-3'. Cleavage occurs on the 3'-side of the TT dinucleotide at the point of strand exchange. HJ branch migration catalyzed by RuvA-RuvB allows RuvC to scan DNA until it finds its consensus sequence, where it cleaves and resolves the cruciform DNA. In Pseudomonas fluorescens (strain Pf0-1), this protein is Crossover junction endodeoxyribonuclease RuvC.